The following is a 473-amino-acid chain: tRNA modification GTPase MnmE (473 aa).

3 residues coordinate (6S)-5-formyl-5,6,7,8-tetrahydrofolate: R31, E95, and R134. Residues 230-394 (GVSTVIAGKP…LKQHMGDLVK (165 aa)) enclose the TrmE-type G domain. Residues 240–245 (NAGKST), 259–265 (SHMPGTT), and 284–287 (DTAG) each bind GTP. Mg(2+) is bound by residues S244 and T265. K473 is a binding site for (6S)-5-formyl-5,6,7,8-tetrahydrofolate.

It belongs to the TRAFAC class TrmE-Era-EngA-EngB-Septin-like GTPase superfamily. TrmE GTPase family. Homodimer. Heterotetramer of two MnmE and two MnmG subunits. It depends on K(+) as a cofactor.

The protein localises to the cytoplasm. In terms of biological role, exhibits a very high intrinsic GTPase hydrolysis rate. Involved in the addition of a carboxymethylaminomethyl (cmnm) group at the wobble position (U34) of certain tRNAs, forming tRNA-cmnm(5)s(2)U34. The protein is tRNA modification GTPase MnmE of Chlorobaculum tepidum (strain ATCC 49652 / DSM 12025 / NBRC 103806 / TLS) (Chlorobium tepidum).